A 1032-amino-acid chain; its full sequence is MKLGNPFVFRPGPVSFWTTIVYLAIIIPLIYVQETVPPAPSEKELPQGVNLTEAWLDLEVITRSYHPFNSHSNDIVREYLMRRSRDILERNGIDYTTDLTGGVPWESRYLSSAEHPVQAAEVSARPRGATLFDDRISNVTMTNPQPNNTMGRYFEGNNFYVYIHGSEDPEGDWWTSDNVQRVARNGAGVLVNCHFDSVSTGYGATDDGMACISLLQLLSHFTSEGHQPKNGIVLLFNNAEEDGLFGAQAFGYSPLVQFCNTFVNLEGAGAGGRAMLFRTTDLEAAEAYSKSPHPFGSVVASNAFERGVIKSGTDYSVFVDNYGQRGLDIAFYSPRSRYHTEEDDARHTSVDSIWHMLSAALATTESLARTTSTQFNGPRSDGRKDLVQSGRPTAGVWFDWYGSSWSAFALRGLFAWTLTLLITTPLVLFVVTYLLVRDDKWYFFATKVDSTVGDGEETVSFGGWKGFVRFPFALVVATALTIGSVFLLAKVNPLIIYSSGYSVWAMMISLFYFVSWLLLRGAHFVRPSALQRGFTLIWLFIITWVLSVFAAVAEDRMNMGAVYPLAFLHTFAFAAVLISLLEQYALPAKQDFARQVSGENEEEEEQEQENLLGDGGNDANEQNNEDRGDTDIAATPTETTPLRAGEEGHGSSEQTTTFANTYRRPVPETRVETRSGNNRKRSFPPYENEQAWSGRLPTWTWFIQLLLLVPLYVTVLGNLALVQTTSIGKTGTDGSSLLAPLMGVGILAILLLLPLTPFIHRVSHHVPLFLFLVFIGTLIYNLTAFPFSDNNRFKFYFKQVVDLDKGSNVVTLNGLEEFVRPVISSIPTPAGQRIHCDEDPFLSNLRNCQYDASLLPPDVADGEELESLISIEASKSKNGKTILVSLDALNTRVCYLDTSFPIFGFSVHGGAKRDDRFGSFPPEGLQQIQLWRRDWEKGWNVTLHLGGHVLPMNEDSVEATEVDEVDDDPSGGELKRGAAKELIVTARCAWSDANSANTIPAFHEVKQFMPRWAIVAKKTVGLVEITKKIKVA.

Residues 1–11 are Cytoplasmic-facing; it reads MKLGNPFVFRP. A helical membrane pass occupies residues 12–32; the sequence is GPVSFWTTIVYLAIIIPLIYV. Topologically, residues 33-415 are vacuolar; it reads QETVPPAPSE…SAFALRGLFA (383 aa). 3 N-linked (GlcNAc...) asparagine glycosylation sites follow: Asn50, Asn138, and Asn147. 2 residues coordinate Zn(2+): His194 and Asp206. Catalysis depends on Glu240, which acts as the Proton acceptor. 3 residues coordinate Zn(2+): Glu241, Glu266, and His339. Residues 416–436 traverse the membrane as a helical segment; the sequence is WTLTLLITTPLVLFVVTYLLV. Residues 437-469 are Cytoplasmic-facing; the sequence is RDDKWYFFATKVDSTVGDGEETVSFGGWKGFVR. A helical membrane pass occupies residues 470–490; the sequence is FPFALVVATALTIGSVFLLAK. The Vacuolar portion of the chain corresponds to 491–493; it reads VNP. Residues 494–514 traverse the membrane as a helical segment; that stretch reads LIIYSSGYSVWAMMISLFYFV. At 515-532 the chain is on the cytoplasmic side; that stretch reads SWLLLRGAHFVRPSALQR. The chain crosses the membrane as a helical span at residues 533–553; the sequence is GFTLIWLFIITWVLSVFAAVA. Residues 554–560 are Vacuolar-facing; it reads EDRMNMG. A helical membrane pass occupies residues 561–581; that stretch reads AVYPLAFLHTFAFAAVLISLL. Topologically, residues 582 to 701 are cytoplasmic; it reads EQYALPAKQD…WSGRLPTWTW (120 aa). The segment at 595-688 is disordered; that stretch reads QVSGENEEEE…RKRSFPPYEN (94 aa). Positions 599–608 are enriched in acidic residues; that stretch reads ENEEEEEQEQ. The span at 651-660 shows a compositional bias: polar residues; it reads SSEQTTTFAN. Residues 702-722 traverse the membrane as a helical segment; sequence FIQLLLLVPLYVTVLGNLALV. Residues 723–738 lie on the Vacuolar side of the membrane; the sequence is QTTSIGKTGTDGSSLL. Residues 739-759 form a helical membrane-spanning segment; sequence APLMGVGILAILLLLPLTPFI. At 760–766 the chain is on the cytoplasmic side; it reads HRVSHHV. A helical transmembrane segment spans residues 767 to 787; that stretch reads PLFLFLVFIGTLIYNLTAFPF. Residues 788 to 1032 are Vacuolar-facing; that stretch reads SDNNRFKFYF…VEITKKIKVA (245 aa). Asn940 carries N-linked (GlcNAc...) asparagine glycosylation.

It belongs to the peptidase M28 family. Zn(2+) is required as a cofactor.

It localises to the vacuole membrane. Its function is as follows. May be involved in vacuolar sorting and osmoregulation. The chain is Vacuolar membrane protease from Metarhizium robertsii (strain ARSEF 23 / ATCC MYA-3075) (Metarhizium anisopliae (strain ARSEF 23)).